A 201-amino-acid chain; its full sequence is 3-isopropylmalate dehydratase small subunit (201 aa).

It belongs to the LeuD family. LeuD type 1 subfamily. As to quaternary structure, heterodimer of LeuC and LeuD.

It carries out the reaction (2R,3S)-3-isopropylmalate = (2S)-2-isopropylmalate. It functions in the pathway amino-acid biosynthesis; L-leucine biosynthesis; L-leucine from 3-methyl-2-oxobutanoate: step 2/4. Its function is as follows. Catalyzes the isomerization between 2-isopropylmalate and 3-isopropylmalate, via the formation of 2-isopropylmaleate. The sequence is that of 3-isopropylmalate dehydratase small subunit from Shewanella halifaxensis (strain HAW-EB4).